Reading from the N-terminus, the 382-residue chain is Bifunctional enzyme IspD/IspF (382 aa).

The interval 1–225 is 2-C-methyl-D-erythritol 4-phosphate cytidylyltransferase; it reads MTFSVVIVAA…EHLAGVARVT (225 aa). The 2-C-methyl-D-erythritol 2,4-cyclodiphosphate synthase stretch occupies residues 226–382; the sequence is RVGQGFDAHR…SAVVAVETPA (157 aa). Positions 232 and 234 each coordinate a divalent metal cation. 4-CDP-2-C-methyl-D-erythritol 2-phosphate is bound by residues 232–234 and 258–259; these read DAH and HS. A divalent metal cation is bound at residue His-266. Residues 280 to 282, 356 to 359, Phe-363, and Arg-366 each bind 4-CDP-2-C-methyl-D-erythritol 2-phosphate; these read DIG and TTTE.

This sequence in the N-terminal section; belongs to the IspD/TarI cytidylyltransferase family. IspD subfamily. The protein in the C-terminal section; belongs to the IspF family. The cofactor is a divalent metal cation.

It catalyses the reaction 2-C-methyl-D-erythritol 4-phosphate + CTP + H(+) = 4-CDP-2-C-methyl-D-erythritol + diphosphate. The catalysed reaction is 4-CDP-2-C-methyl-D-erythritol 2-phosphate = 2-C-methyl-D-erythritol 2,4-cyclic diphosphate + CMP. Its pathway is isoprenoid biosynthesis; isopentenyl diphosphate biosynthesis via DXP pathway; isopentenyl diphosphate from 1-deoxy-D-xylulose 5-phosphate: step 2/6. It functions in the pathway isoprenoid biosynthesis; isopentenyl diphosphate biosynthesis via DXP pathway; isopentenyl diphosphate from 1-deoxy-D-xylulose 5-phosphate: step 4/6. Functionally, bifunctional enzyme that catalyzes the formation of 4-diphosphocytidyl-2-C-methyl-D-erythritol from CTP and 2-C-methyl-D-erythritol 4-phosphate (MEP) (IspD), and catalyzes the conversion of 4-diphosphocytidyl-2-C-methyl-D-erythritol 2-phosphate (CDP-ME2P) to 2-C-methyl-D-erythritol 2,4-cyclodiphosphate (ME-CPP) with a corresponding release of cytidine 5-monophosphate (CMP) (IspF). This Caulobacter vibrioides (strain ATCC 19089 / CIP 103742 / CB 15) (Caulobacter crescentus) protein is Bifunctional enzyme IspD/IspF.